The sequence spans 411 residues: Imidazolonepropionase (411 aa).

Fe(3+) contacts are provided by histidine 78 and histidine 80. Zn(2+) is bound by residues histidine 78 and histidine 80. 3 residues coordinate 4-imidazolone-5-propanoate: arginine 87, tyrosine 150, and histidine 183. Tyrosine 150 serves as a coordination point for N-formimidoyl-L-glutamate. Fe(3+) is bound at residue histidine 248. Histidine 248 lines the Zn(2+) pocket. Glutamine 251 provides a ligand contact to 4-imidazolone-5-propanoate. Aspartate 322 provides a ligand contact to Fe(3+). Position 322 (aspartate 322) interacts with Zn(2+). Positions 324 and 326 each coordinate N-formimidoyl-L-glutamate. 4-imidazolone-5-propanoate is bound at residue serine 327.

It belongs to the metallo-dependent hydrolases superfamily. HutI family. The cofactor is Zn(2+). It depends on Fe(3+) as a cofactor.

It localises to the cytoplasm. The catalysed reaction is 4-imidazolone-5-propanoate + H2O = N-formimidoyl-L-glutamate. It participates in amino-acid degradation; L-histidine degradation into L-glutamate; N-formimidoyl-L-glutamate from L-histidine: step 3/3. In terms of biological role, catalyzes the hydrolytic cleavage of the carbon-nitrogen bond in imidazolone-5-propanoate to yield N-formimidoyl-L-glutamate. It is the third step in the universal histidine degradation pathway. This Flavobacterium johnsoniae (strain ATCC 17061 / DSM 2064 / JCM 8514 / BCRC 14874 / CCUG 350202 / NBRC 14942 / NCIMB 11054 / UW101) (Cytophaga johnsonae) protein is Imidazolonepropionase.